We begin with the raw amino-acid sequence, 336 residues long: Fructose-1,6-bisphosphatase class 1 (336 aa).

Mg(2+)-binding residues include Glu-90, Asp-112, Leu-114, and Asp-115. Residues 115–118 (DGSS), Asn-211, and Lys-277 each bind substrate. Glu-283 contributes to the Mg(2+) binding site.

Belongs to the FBPase class 1 family. In terms of assembly, homotetramer. Requires Mg(2+) as cofactor.

It localises to the cytoplasm. It carries out the reaction beta-D-fructose 1,6-bisphosphate + H2O = beta-D-fructose 6-phosphate + phosphate. The protein operates within carbohydrate biosynthesis; gluconeogenesis. This Pseudomonas putida (strain W619) protein is Fructose-1,6-bisphosphatase class 1.